The following is a 474-amino-acid chain: Glycogen synthase (474 aa).

Lysine 12 lines the ADP-alpha-D-glucose pocket.

It belongs to the glycosyltransferase 1 family. Bacterial/plant glycogen synthase subfamily.

The catalysed reaction is [(1-&gt;4)-alpha-D-glucosyl](n) + ADP-alpha-D-glucose = [(1-&gt;4)-alpha-D-glucosyl](n+1) + ADP + H(+). The protein operates within glycan biosynthesis; glycogen biosynthesis. In terms of biological role, synthesizes alpha-1,4-glucan chains using ADP-glucose. The polypeptide is Glycogen synthase (Xanthomonas campestris pv. campestris (strain 8004)).